The sequence spans 328 residues: MNRKKIIVAAVIVALLATLAYGWHYYRQQNDASLTLYGNVDIRTVNLGFRVAGRLASLAVDEGDDIHPGQTLGKLDDGPYLNALKQAQANVQSAQAQLALLKAGYREEEIAQVRSEVAQRQAAFDYADNFLKRQQGLWASKAVSANELENARTARNQAQANLQAAKDKLAQFLSGNRPQEIAQAEANLAQTEAELAQAQLNLQDTILLAPSAGTVLTRAVEPGTILSASNTVFTVSLTDPVWVRAYVSERHLGQAIPGSEVEVFTDGRPDKPYHGKIGFVSPTAEFTPKTVETPDLRTDLVYRLRIIITDADESLRQGMPVTVRFPQR.

The first 22 residues, 1-22 (MNRKKIIVAAVIVALLATLAYG), serve as a signal peptide directing secretion. 2 coiled-coil regions span residues 80-109 (YLNALKQAQANVQSAQAQLALLKAGYREEE) and 141-209 (KAVS…ILLA).

This sequence belongs to the UPF0194 family.

The protein resides in the periplasm. This is UPF0194 membrane protein YPA_1093 from Yersinia pestis bv. Antiqua (strain Antiqua).